The sequence spans 379 residues: Chaperone protein DnaJ (379 aa).

One can recognise a J domain in the interval 5–70 (DYYEVLGVQK…QKRAAYDRFG (66 aa)). A CR-type zinc finger spans residues 137 to 215 (GATTTVRVPT…CGGQGRVRKE (79 aa)). Cys150, Cys153, Cys167, Cys170, Cys189, Cys192, Cys203, and Cys206 together coordinate Zn(2+). CXXCXGXG motif repeat units lie at residues 150–157 (CESCNGTG), 167–174 (CPTCNGHG), 189–196 (CPACHGVG), and 203–210 (CRTCGGQG).

Belongs to the DnaJ family. As to quaternary structure, homodimer. It depends on Zn(2+) as a cofactor.

Its subcellular location is the cytoplasm. Participates actively in the response to hyperosmotic and heat shock by preventing the aggregation of stress-denatured proteins and by disaggregating proteins, also in an autonomous, DnaK-independent fashion. Unfolded proteins bind initially to DnaJ; upon interaction with the DnaJ-bound protein, DnaK hydrolyzes its bound ATP, resulting in the formation of a stable complex. GrpE releases ADP from DnaK; ATP binding to DnaK triggers the release of the substrate protein, thus completing the reaction cycle. Several rounds of ATP-dependent interactions between DnaJ, DnaK and GrpE are required for fully efficient folding. Also involved, together with DnaK and GrpE, in the DNA replication of plasmids through activation of initiation proteins. The sequence is that of Chaperone protein DnaJ from Rhodospirillum centenum (strain ATCC 51521 / SW).